Here is a 163-residue protein sequence, read N- to C-terminus: Large ribosomal subunit protein uL15 (163 aa).

Residues 1–29 show a composition bias toward basic residues; sequence MSKKRRQRGSRTHGGGSHKNRRGAGHRGG. Disordered regions lie at residues 1-59 and 135-163; these read MSKK…KTRR and VADGEAVLSERGEELEAEKDSTDEEDEES. Basic and acidic residues-rich tracts occupy residues 33–46 and 142–154; these read AGRDKHEFHNHEPL and LSERGEELEAEKD.

The protein belongs to the universal ribosomal protein uL15 family. As to quaternary structure, part of the 50S ribosomal subunit.

In terms of biological role, binds to the 23S rRNA. In Natronomonas pharaonis (strain ATCC 35678 / DSM 2160 / CIP 103997 / JCM 8858 / NBRC 14720 / NCIMB 2260 / Gabara) (Halobacterium pharaonis), this protein is Large ribosomal subunit protein uL15.